Reading from the N-terminus, the 200-residue chain is Recombination protein RecR (200 aa).

A C4-type zinc finger spans residues 58 to 73 (CQKCHNISDTTLCSIC). The Toprim domain maps to 81-176 (GLICVVENIQ…KLSNIARGVA (96 aa)).

The protein belongs to the RecR family.

Its function is as follows. May play a role in DNA repair. It seems to be involved in an RecBC-independent recombinational process of DNA repair. It may act with RecF and RecO. In Amoebophilus asiaticus (strain 5a2), this protein is Recombination protein RecR.